The following is a 512-amino-acid chain: Protein OS-9 homolog (512 aa).

A signal peptide spans M1–A17. Residues Q71–S91 form a disordered region. A compositionally biased stretch (basic and acidic residues) spans R73–D88. N-linked (GlcNAc...) asparagine glycosylation is present at N118. The 140-residue stretch at D149–D288 folds into the MRH domain. C151 and C164 form a disulfide bridge. Residues W158, W159, Q171, D242, R248, E270, and Y276 each contribute to the a mannooligosaccharide derivative site. Intrachain disulfides connect C241-C274 and C256-C286. 2 disordered regions span residues Q329–V349 and A485–L512. A compositionally biased stretch (acidic residues) spans D492–Q504. The Prevents secretion from ER signature appears at K509–L512.

The protein belongs to the OS-9 family. As to quaternary structure, interacts with missfolded ER lumenal proteins.

Its subcellular location is the endoplasmic reticulum membrane. In terms of biological role, lectin involved in the quality control of the secretory pathway. As a member of the endoplasmic reticulum-associated degradation lumenal (ERAD-L) surveillance system, targets misfolded endoplasmic reticulum lumenal glycoproteins for degradation. The chain is Protein OS-9 homolog (YOS1) from Gibberella zeae (strain ATCC MYA-4620 / CBS 123657 / FGSC 9075 / NRRL 31084 / PH-1) (Wheat head blight fungus).